The chain runs to 97 residues: Anti-sigma-YlaC factor YlaD (97 aa).

3 residues coordinate Zn(2+): H29, C33, and C36. A helical membrane pass occupies residues 71–93; the sequence is YYGLLIMKAACWFGAAVAMMLII.

The protein belongs to the zinc-associated anti-sigma factor (ZAS) superfamily. Zn(2+) serves as cofactor.

Its subcellular location is the cell membrane. Functionally, anti-sigma factor for YlaC. The protein is Anti-sigma-YlaC factor YlaD (ylaD) of Bacillus subtilis (strain 168).